The chain runs to 80 residues: Serine rich endogenous peptide 18 (80 aa).

The signal sequence occupies residues 1-25 (MYNVVVCLLTLSFLLLTGLSNTAEA). The short motif at 45-59 (KAEVGGSCSPHAHGR) is the SCOOP motif element. Residues 50–80 (GSCSPHAHGRGPPNRPGSSNIPGSPKRCTKP) are disordered. Positions 51 to 53 (SCS) match the SxS motif essential for MIK2 binding motif.

The protein belongs to the serine rich endogenous peptide (SCOOP) phytocytokine family. In terms of assembly, interacts with MIK2 (via extracellular leucine-rich repeat domain); this interaction triggers the formation of complex between MIK2 and the BAK1/SERK3 and SERK4 coreceptors, and subsequent BAK1 activation by phosphorylation.

The protein localises to the cell membrane. The protein resides in the secreted. Its subcellular location is the extracellular space. It localises to the apoplast. Brassicaceae-specific phytocytokine (plant endogenous peptide released into the apoplast) perceived by MIK2 in a BAK1/SERK3 and SERK4 coreceptors-dependent manner, that modulates various physiological and antimicrobial processes including growth prevention and reactive oxygen species (ROS) response regulation. The polypeptide is Serine rich endogenous peptide 18 (Arabidopsis thaliana (Mouse-ear cress)).